Here is a 192-residue protein sequence, read N- to C-terminus: MKNKVVVVTGVPGVGGTTVTQKAMDILSEEGLNYKMVNFGSAMFDVANEEGLASDRDQMRKLDPETQKRIQKMAGRKIAEMAKESPVAVDTHSTVKTPKGYLPGLPAWVLTELNPDIVIVVETDGDEILMRRLSDESRKRDLETTASIEEHQFMNRAAAMSYGVLTGATVKIVKNKNGLVDKAVEELISVLR.

ATP is bound at residue 10-18; the sequence is GVPGVGGTT.

This sequence belongs to the archaeal adenylate kinase family. Monomer.

The protein resides in the cytoplasm. It carries out the reaction AMP + ATP = 2 ADP. The chain is Adenylate kinase from Methanococcus maripaludis (strain C6 / ATCC BAA-1332).